Here is a 548-residue protein sequence, read N- to C-terminus: Chaperonin GroEL (548 aa).

Residues 30 to 33 (TLGP), Lys-51, 87 to 91 (DGTTT), Gly-415, 479 to 481 (NAA), and Asp-495 contribute to the ATP site. A disordered region spans residues 524–548 (LPKEDKSSDSSSSPAGGMGGMGGMM). The span at 539 to 548 (GGMGGMGGMM) shows a compositional bias: gly residues.

It belongs to the chaperonin (HSP60) family. As to quaternary structure, forms a cylinder of 14 subunits composed of two heptameric rings stacked back-to-back. Interacts with the co-chaperonin GroES.

It localises to the cytoplasm. It catalyses the reaction ATP + H2O + a folded polypeptide = ADP + phosphate + an unfolded polypeptide.. In terms of biological role, together with its co-chaperonin GroES, plays an essential role in assisting protein folding. The GroEL-GroES system forms a nano-cage that allows encapsulation of the non-native substrate proteins and provides a physical environment optimized to promote and accelerate protein folding. This is Chaperonin GroEL from Buchnera aphidicola subsp. Acyrthosiphon pisum (strain 5A).